A 489-amino-acid chain; its full sequence is MLKVKNYEFWFITGSQHLYGPEVIEQVSDNSKIIVDELNKKDLPYKIVFKTVATDSPSIRKVCNDANNDENCAGIITWMHTFSPAKMWIHGLTELRKPLLHLHTQFNKEIPWGTIDMDFMNLNQAAHGDREFGYIGARLDIARKIVVGHWTDASVSADIAKWMAPAVAFTEGHSIKVARFGDNMRNVAVTDGDRIEAQIKFGWIVDYYGVGDLVKSMDAVTEDQIDELMAEYSKLYDIDPKASIDSIREQAKIEIGLRTFLDARGYTAFTTNFEALHGMKQLPGLAVQHLMAEGYGFGAEGDWKTAALLRAMKIMASGKGTGLMEDYTYNMDSENGLILGAHMLEICPTLAATKPVIEVHPLGIGGKEDPARLVFKGASGPAVAASLIDMGNRFRLIVNSVDCVEVTEDMPNLPVASVLWKPQPSLKEGAKAWIMAGGAHHTSFSFYVDEEQLLDWADMVGVECVVINNDTKLSTFKNELKFSSTAWKF.

4 residues coordinate Mn(2+): Glu300, Glu325, His342, and His441.

The protein belongs to the arabinose isomerase family. Requires Mn(2+) as cofactor.

It catalyses the reaction beta-L-arabinopyranose = L-ribulose. It participates in carbohydrate degradation; L-arabinose degradation via L-ribulose; D-xylulose 5-phosphate from L-arabinose (bacterial route): step 1/3. Functionally, catalyzes the conversion of L-arabinose to L-ribulose. This Clostridium beijerinckii (strain ATCC 51743 / NCIMB 8052) (Clostridium acetobutylicum) protein is L-arabinose isomerase.